Consider the following 319-residue polypeptide: Pantothenate kinase (319 aa).

Position 101 to 108 (101 to 108) interacts with ATP; sequence GSVAVGKS.

It belongs to the prokaryotic pantothenate kinase family.

Its subcellular location is the cytoplasm. It catalyses the reaction (R)-pantothenate + ATP = (R)-4'-phosphopantothenate + ADP + H(+). The protein operates within cofactor biosynthesis; coenzyme A biosynthesis; CoA from (R)-pantothenate: step 1/5. In Clavibacter sepedonicus (Clavibacter michiganensis subsp. sepedonicus), this protein is Pantothenate kinase.